Reading from the N-terminus, the 181-residue chain is uncharacterized protein (181 aa).

This is an uncharacterized protein from Methanocaldococcus jannaschii (strain ATCC 43067 / DSM 2661 / JAL-1 / JCM 10045 / NBRC 100440) (Methanococcus jannaschii).